The following is a 495-amino-acid chain: Cytochrome P450 2E1 (495 aa).

298–303 (FAGTET) lines the substrate pocket. Cysteine 437 provides a ligand contact to heme.

The protein belongs to the cytochrome P450 family. In terms of assembly, interacts with chaperones HSP70 and HSP90; this interaction is required for initial targeting to mitochondria. Requires heme as cofactor.

Its subcellular location is the endoplasmic reticulum membrane. The protein localises to the microsome membrane. The protein resides in the mitochondrion inner membrane. It catalyses the reaction an organic molecule + reduced [NADPH--hemoprotein reductase] + O2 = an alcohol + oxidized [NADPH--hemoprotein reductase] + H2O + H(+). It carries out the reaction (5Z,8Z,11Z)-eicosatrienoate + reduced [NADPH--hemoprotein reductase] + O2 = 19-hydroxy-(5Z,8Z,11Z)-eicosatrienoate + oxidized [NADPH--hemoprotein reductase] + H2O + H(+). The enzyme catalyses (5Z,8Z,11Z,14Z,17Z)-eicosapentaenoate + reduced [NADPH--hemoprotein reductase] + O2 = 19-hydroxy-(5Z,8Z,11Z,14Z,17Z)-eicosapentaenoate + oxidized [NADPH--hemoprotein reductase] + H2O + H(+). The catalysed reaction is (4Z,7Z,10Z,13Z,16Z,19Z)-docosahexaenoate + reduced [NADPH--hemoprotein reductase] + O2 = 21-hydroxy-(4Z,7Z,10Z,13Z,16Z,19Z)-docosahexaenoate + oxidized [NADPH--hemoprotein reductase] + H2O + H(+). It catalyses the reaction dodecanoate + reduced [NADPH--hemoprotein reductase] + O2 = 11-hydroxydodecanoate + oxidized [NADPH--hemoprotein reductase] + H2O + H(+). It carries out the reaction tetradecanoate + reduced [NADPH--hemoprotein reductase] + O2 = 13-hydroxytetradecanoate + oxidized [NADPH--hemoprotein reductase] + H2O + H(+). The enzyme catalyses 4-nitrophenol + NADPH + O2 + H(+) = 4-nitrocatechol + NADP(+) + H2O. Its pathway is lipid metabolism; fatty acid metabolism. With respect to regulation, the omega-1 hydroxylase activity is stimulated by cytochrome b5. A cytochrome P450 monooxygenase involved in the metabolism of fatty acids. Mechanistically, uses molecular oxygen inserting one oxygen atom into a substrate, and reducing the second into a water molecule, with two electrons provided by NADPH via cytochrome P450 reductase (NADPH--hemoprotein reductase). Catalyzes the hydroxylation of carbon-hydrogen bonds. Hydroxylates fatty acids specifically at the omega-1 position displaying the highest catalytic activity for saturated fatty acids. May be involved in the oxidative metabolism of xenobiotics. This Bos taurus (Bovine) protein is Cytochrome P450 2E1 (CYP2E1).